Reading from the N-terminus, the 151-residue chain is Ribosome maturation factor RimP (151 aa).

This sequence belongs to the RimP family.

It is found in the cytoplasm. Functionally, required for maturation of 30S ribosomal subunits. The chain is Ribosome maturation factor RimP from Synechocystis sp. (strain ATCC 27184 / PCC 6803 / Kazusa).